Reading from the N-terminus, the 394-residue chain is Elongation factor Tu (394 aa).

The 195-residue stretch at 10-204 folds into the tr-type G domain; that stretch reads KPHVNIGTIG…AVDSYIPQPV (195 aa). The G1 stretch occupies residues 19–26; that stretch reads GHVDHGKT. 19–26 serves as a coordination point for GTP; that stretch reads GHVDHGKT. A Mg(2+)-binding site is contributed by Thr-26. A G2 region spans residues 60-64; it reads GITIS. The tract at residues 81-84 is G3; sequence DCPG. GTP is bound by residues 81–85 and 136–139; these read DCPGH and NKVD. The G4 stretch occupies residues 136–139; sequence NKVD. The interval 174-176 is G5; sequence SAL.

Belongs to the TRAFAC class translation factor GTPase superfamily. Classic translation factor GTPase family. EF-Tu/EF-1A subfamily. In terms of assembly, monomer.

The protein localises to the cytoplasm. It catalyses the reaction GTP + H2O = GDP + phosphate + H(+). In terms of biological role, GTP hydrolase that promotes the GTP-dependent binding of aminoacyl-tRNA to the A-site of ribosomes during protein biosynthesis. The chain is Elongation factor Tu from Rickettsia felis (strain ATCC VR-1525 / URRWXCal2) (Rickettsia azadi).